Reading from the N-terminus, the 91-residue chain is Probable Fe(2+)-trafficking protein (91 aa).

It belongs to the Fe(2+)-trafficking protein family.

Its function is as follows. Could be a mediator in iron transactions between iron acquisition and iron-requiring processes, such as synthesis and/or repair of Fe-S clusters in biosynthetic enzymes. This chain is Probable Fe(2+)-trafficking protein, found in Burkholderia mallei (strain NCTC 10247).